The chain runs to 170 residues: NADH-quinone oxidoreductase subunit B (170 aa).

Cys-37, Cys-38, Cys-102, and Cys-131 together coordinate [4Fe-4S] cluster.

This sequence belongs to the complex I 20 kDa subunit family. NDH-1 is composed of 14 different subunits. Subunits NuoB, C, D, E, F, and G constitute the peripheral sector of the complex. Requires [4Fe-4S] cluster as cofactor.

The protein localises to the cell inner membrane. It carries out the reaction a quinone + NADH + 5 H(+)(in) = a quinol + NAD(+) + 4 H(+)(out). In terms of biological role, NDH-1 shuttles electrons from NADH, via FMN and iron-sulfur (Fe-S) centers, to quinones in the respiratory chain. The immediate electron acceptor for the enzyme in this species is believed to be ubiquinone. Couples the redox reaction to proton translocation (for every two electrons transferred, four hydrogen ions are translocated across the cytoplasmic membrane), and thus conserves the redox energy in a proton gradient. This chain is NADH-quinone oxidoreductase subunit B, found in Geotalea uraniireducens (strain Rf4) (Geobacter uraniireducens).